The primary structure comprises 91 residues: RNA-binding protein Hfq (91 aa).

The 60-residue stretch at 9–68 (DPFLNALRRERVPVSVYLVNGIKLQGTIESFDQFVVLLRNTVSQMVYKHAISTVVPARNV) folds into the Sm domain.

Belongs to the Hfq family. In terms of assembly, homohexamer.

Its function is as follows. RNA chaperone that binds small regulatory RNA (sRNAs) and mRNAs to facilitate mRNA translational regulation in response to envelope stress, environmental stress and changes in metabolite concentrations. Also binds with high specificity to tRNAs. The chain is RNA-binding protein Hfq from Stenotrophomonas maltophilia (strain K279a).